Consider the following 679-residue polypeptide: Acetyl-coenzyme A synthetase 2 (679 aa).

Residues 1–32 (MTSSPTHQVVHEANNIKKQETPKEFFERQPRQ) are disordered. A compositionally biased stretch (basic and acidic residues) spans 14–30 (NNIKKQETPKEFFERQP). CoA-binding positions include 207 to 210 (RGGK) and Thr326. ATP is bound by residues 402-404 (GEP), 426-431 (DTYWQT), Asp517, and Arg532. Ser540 contributes to the CoA binding site. Residue Arg543 participates in ATP binding. Residue Arg611 coordinates CoA.

The protein belongs to the ATP-dependent AMP-binding enzyme family.

The catalysed reaction is acetate + ATP + CoA = acetyl-CoA + AMP + diphosphate. The chain is Acetyl-coenzyme A synthetase 2 (ACS2) from Debaryomyces hansenii (strain ATCC 36239 / CBS 767 / BCRC 21394 / JCM 1990 / NBRC 0083 / IGC 2968) (Yeast).